Here is a 208-residue protein sequence, read N- to C-terminus: ATP-dependent Clp protease proteolytic subunit (208 aa).

Serine 105 functions as the Nucleophile in the catalytic mechanism. The active site involves histidine 130.

This sequence belongs to the peptidase S14 family. As to quaternary structure, fourteen ClpP subunits assemble into 2 heptameric rings which stack back to back to give a disk-like structure with a central cavity, resembling the structure of eukaryotic proteasomes.

It is found in the cytoplasm. The catalysed reaction is Hydrolysis of proteins to small peptides in the presence of ATP and magnesium. alpha-casein is the usual test substrate. In the absence of ATP, only oligopeptides shorter than five residues are hydrolyzed (such as succinyl-Leu-Tyr-|-NHMec, and Leu-Tyr-Leu-|-Tyr-Trp, in which cleavage of the -Tyr-|-Leu- and -Tyr-|-Trp bonds also occurs).. Its function is as follows. Cleaves peptides in various proteins in a process that requires ATP hydrolysis. Has a chymotrypsin-like activity. Plays a major role in the degradation of misfolded proteins. In Xylella fastidiosa (strain 9a5c), this protein is ATP-dependent Clp protease proteolytic subunit.